Reading from the N-terminus, the 144-residue chain is Large ribosomal subunit protein uL13 (144 aa).

It belongs to the universal ribosomal protein uL13 family. In terms of assembly, part of the 50S ribosomal subunit.

Functionally, this protein is one of the early assembly proteins of the 50S ribosomal subunit, although it is not seen to bind rRNA by itself. It is important during the early stages of 50S assembly. This is Large ribosomal subunit protein uL13 from Lawsonia intracellularis (strain PHE/MN1-00).